Consider the following 425-residue polypeptide: Dihydroorotase (425 aa).

Positions 56 and 58 each coordinate Zn(2+). Substrate-binding positions include 58–60 (HYR) and Asn90. Positions 148, 175, and 228 each coordinate Zn(2+). Asn274 provides a ligand contact to substrate. Position 301 (Asp301) interacts with Zn(2+). The active site involves Asp301. Substrate contacts are provided by residues His305 and 319 to 320 (FG).

It belongs to the metallo-dependent hydrolases superfamily. DHOase family. Class I DHOase subfamily. Zn(2+) is required as a cofactor.

The catalysed reaction is (S)-dihydroorotate + H2O = N-carbamoyl-L-aspartate + H(+). It participates in pyrimidine metabolism; UMP biosynthesis via de novo pathway; (S)-dihydroorotate from bicarbonate: step 3/3. Catalyzes the reversible cyclization of carbamoyl aspartate to dihydroorotate. The protein is Dihydroorotase of Lactobacillus acidophilus (strain ATCC 700396 / NCK56 / N2 / NCFM).